Here is a 255-residue protein sequence, read N- to C-terminus: tRNA (guanine-N(1)-)-methyltransferase (255 aa).

S-adenosyl-L-methionine contacts are provided by residues G114 and I134–L139.

Belongs to the RNA methyltransferase TrmD family. Homodimer.

It is found in the cytoplasm. It carries out the reaction guanosine(37) in tRNA + S-adenosyl-L-methionine = N(1)-methylguanosine(37) in tRNA + S-adenosyl-L-homocysteine + H(+). In terms of biological role, specifically methylates guanosine-37 in various tRNAs. This Blochmanniella pennsylvanica (strain BPEN) protein is tRNA (guanine-N(1)-)-methyltransferase.